A 1430-amino-acid chain; its full sequence is Nephrocystin-4 (1430 aa).

The segment at 824 to 1430 (MRMGNVGRPP…ETFCVKVRYE (607 aa)) is sufficient for basal bodies localization. Positions 828 to 857 (NVGRPPEKKLKRRETLPPSNSRIITMHDGR) are disordered.

Belongs to the NPHP4 family.

It localises to the cytoplasm. It is found in the cytoskeleton. Its subcellular location is the cilium basal body. Its function is as follows. Involved in the organization of apical junctions. Required for building functional cilia. Involved in the organization of the subapical actin network in multiciliated epithelial cells. Seems to recruit int to basal bodies of motile cilia which subsequently interacts with actin-modifying proteins such as daam1. May down-regulate the canonical Wnt pathway and promote the Wnt-PCP pathway. Acts as a negative regulator of the hippo pathway. In Xenopus laevis (African clawed frog), this protein is Nephrocystin-4 (nphp4).